The chain runs to 149 residues: 3-hydroxyacyl-[acyl-carrier-protein] dehydratase FabZ (149 aa).

Residue histidine 49 is part of the active site.

The protein belongs to the thioester dehydratase family. FabZ subfamily.

It is found in the cytoplasm. It carries out the reaction a (3R)-hydroxyacyl-[ACP] = a (2E)-enoyl-[ACP] + H2O. Its function is as follows. Involved in unsaturated fatty acids biosynthesis. Catalyzes the dehydration of short chain beta-hydroxyacyl-ACPs and long chain saturated and unsaturated beta-hydroxyacyl-ACPs. In Sulfurovum sp. (strain NBC37-1), this protein is 3-hydroxyacyl-[acyl-carrier-protein] dehydratase FabZ.